Consider the following 455-residue polypeptide: EP1-like glycoprotein 2 (455 aa).

A signal peptide spans Met1 to Ala22. In terms of domain architecture, Bulb-type lectin spans Glu44–Asp163. Asn56, Asn106, Asn191, Asn211, Asn241, and Asn289 each carry an N-linked (GlcNAc...) asparagine glycan. Position 374 is an S-nitrosocysteine (Cys374). The PAN domain occupies Cys374–Tyr455. Intrachain disulfides connect Cys410–Cys432 and Cys414–Cys420. N-linked (GlcNAc...) asparagine glycosylation is present at Asn446.

The protein resides in the secreted. Its subcellular location is the cell wall. In Arabidopsis thaliana (Mouse-ear cress), this protein is EP1-like glycoprotein 2.